Consider the following 161-residue polypeptide: MTVSFRPTADLVDDIGPDVRSCDLQFRQLGGRTEFAGPISTVRCFQDNALLKSVLSEPGGGGVLVVDGGGSLHTALVGDVIAELARANGWAGLIVNGAVRDSAALRGMDIGVKALGTNPRKSTKTGAGERDVDITLGGVTFTPGDIAYSDDDGIVVVAAGD.

Residues 78–81 (GDVI) and Arg-100 contribute to the substrate site. Residue Asp-101 coordinates a divalent metal cation.

It belongs to the class II aldolase/RraA-like family. As to quaternary structure, homotrimer. The cofactor is a divalent metal cation.

It carries out the reaction 4-hydroxy-4-methyl-2-oxoglutarate = 2 pyruvate. The enzyme catalyses oxaloacetate + H(+) = pyruvate + CO2. Functionally, catalyzes the aldol cleavage of 4-hydroxy-4-methyl-2-oxoglutarate (HMG) into 2 molecules of pyruvate. Also contains a secondary oxaloacetate (OAA) decarboxylase activity due to the common pyruvate enolate transition state formed following C-C bond cleavage in the retro-aldol and decarboxylation reactions. In Mycobacterium avium (strain 104), this protein is Putative 4-hydroxy-4-methyl-2-oxoglutarate aldolase.